A 60-amino-acid chain; its full sequence is Cytochrome c oxidase subunit 9, mitochondrial (60 aa).

Over 1 to 18 (MSAIAPITGSLKKRIMKD) the chain is Mitochondrial matrix. The chain crosses the membrane as a helical span at residues 19 to 37 (IAVGMGLGTVLGSYWWWGF). Residues 38–57 (HKPKIAARENYYTQLAEQKA) are Mitochondrial intermembrane-facing. Positions 58 to 60 (AEE) are cleaved as a propeptide — removed in mature form.

This sequence belongs to the fungal cytochrome c oxidase subunit 7a family. Component of the cytochrome c oxidase (complex IV, CIV), a multisubunit enzyme composed of a catalytic core of 3 subunits and several supernumerary subunits. The complex exists as a monomer or a dimer and forms supercomplexes (SCs) in the inner mitochondrial membrane with ubiquinol-cytochrome c oxidoreductase (cytochrome b-c1 complex, complex III, CIII).

The protein resides in the mitochondrion inner membrane. It participates in energy metabolism; oxidative phosphorylation. Component of the cytochrome c oxidase, the last enzyme in the mitochondrial electron transport chain which drives oxidative phosphorylation. The respiratory chain contains 3 multisubunit complexes succinate dehydrogenase (complex II, CII), ubiquinol-cytochrome c oxidoreductase (cytochrome b-c1 complex, complex III, CIII) and cytochrome c oxidase (complex IV, CIV), that cooperate to transfer electrons derived from NADH and succinate to molecular oxygen, creating an electrochemical gradient over the inner membrane that drives transmembrane transport and the ATP synthase. Cytochrome c oxidase is the component of the respiratory chain that catalyzes the reduction of oxygen to water. Electrons originating from reduced cytochrome c in the intermembrane space (IMS) are transferred via the dinuclear copper A center (CU(A)) of subunit 2 and heme A of subunit 1 to the active site in subunit 1, a binuclear center (BNC) formed by heme A3 and copper B (CU(B)). The BNC reduces molecular oxygen to 2 water molecules using 4 electrons from cytochrome c in the IMS and 4 protons from the mitochondrial matrix. The protein is Cytochrome c oxidase subunit 9, mitochondrial (COX9) of Eremothecium gossypii (strain ATCC 10895 / CBS 109.51 / FGSC 9923 / NRRL Y-1056) (Yeast).